The sequence spans 267 residues: Undecaprenyl-diphosphatase (267 aa).

7 helical membrane passes run 39–59 (QGLA…ILYF), 87–107 (WMIA…KDFI), 111–131 (LRSA…LWWV), 149–169 (ALFI…RSGA), 189–209 (FLMS…KLVT), 218–238 (ALSI…HAFL), and 244–264 (VGMM…IAFL).

It belongs to the UppP family.

The protein resides in the cell inner membrane. It catalyses the reaction di-trans,octa-cis-undecaprenyl diphosphate + H2O = di-trans,octa-cis-undecaprenyl phosphate + phosphate + H(+). Functionally, catalyzes the dephosphorylation of undecaprenyl diphosphate (UPP). Confers resistance to bacitracin. The sequence is that of Undecaprenyl-diphosphatase from Photobacterium profundum (strain SS9).